Here is a 222-residue protein sequence, read N- to C-terminus: Glutathione transferase GST 23 (222 aa).

Residues 4 to 83 (KGVKVLGMWA…YIDEVWKGGY (80 aa)) enclose the GST N-terminal domain. Residues serine 14, lysine 41, valine 55, and 67–68 (ES) each bind glutathione. The region spanning 89 to 220 (DPYERAQARF…ANKARREQLL (132 aa)) is the GST C-terminal domain.

It belongs to the GST superfamily.

The catalysed reaction is RX + glutathione = an S-substituted glutathione + a halide anion + H(+). Involved in multiple disease resistance (MDR). The polypeptide is Glutathione transferase GST 23 (Zea mays (Maize)).